Consider the following 586-residue polypeptide: Arginine--tRNA ligase (586 aa).

The 'HIGH' region signature appears at 131–141; the sequence is ANPTGPLHVGH.

This sequence belongs to the class-I aminoacyl-tRNA synthetase family. In terms of assembly, monomer.

The protein localises to the cytoplasm. It carries out the reaction tRNA(Arg) + L-arginine + ATP = L-arginyl-tRNA(Arg) + AMP + diphosphate. This is Arginine--tRNA ligase from Nitrosomonas eutropha (strain DSM 101675 / C91 / Nm57).